A 253-amino-acid chain; its full sequence is Triosephosphate isomerase, cytosolic (253 aa).

Residues Asn-10 and Lys-12 each contribute to the substrate site. The active-site Electrophile is His-96. Glu-166 serves as the catalytic Proton acceptor.

The protein belongs to the triosephosphate isomerase family. Homodimer.

The protein localises to the cytoplasm. The enzyme catalyses D-glyceraldehyde 3-phosphate = dihydroxyacetone phosphate. It functions in the pathway carbohydrate biosynthesis; gluconeogenesis. The protein operates within carbohydrate degradation; glycolysis; D-glyceraldehyde 3-phosphate from glycerone phosphate: step 1/1. The polypeptide is Triosephosphate isomerase, cytosolic (Zea mays (Maize)).